Reading from the N-terminus, the 525-residue chain is GMP synthase [glutamine-hydrolyzing] (525 aa).

In terms of domain architecture, Glutamine amidotransferase type-1 spans 7–207 (RILVIDFGSQ…ITCICRCKSS (201 aa)). Catalysis depends on Cys-84, which acts as the Nucleophile. Catalysis depends on residues His-181 and Glu-183. Positions 208–400 (WKIANIIDDI…LGIPYDIAYR (193 aa)) constitute a GMPS ATP-PPase domain. 235-241 (SGGIDSL) lines the ATP pocket.

Homodimer.

The catalysed reaction is XMP + L-glutamine + ATP + H2O = GMP + L-glutamate + AMP + diphosphate + 2 H(+). The protein operates within purine metabolism; GMP biosynthesis; GMP from XMP (L-Gln route): step 1/1. In terms of biological role, catalyzes the synthesis of GMP from XMP. This is GMP synthase [glutamine-hydrolyzing] from Blochmanniella pennsylvanica (strain BPEN).